A 715-amino-acid chain; its full sequence is uncharacterized protein (715 aa).

4 disordered regions span residues 192–216 (ASSV…SVTA), 300–348 (NEEV…TSKR), 461–481 (ASSS…RSNE), and 580–630 (FTVS…KPPK). The segment covering 202-213 (NNTSPYPPSNSS) has biased composition (low complexity). 2 stretches are compositionally biased toward polar residues: residues 301–326 (EEVS…NKND) and 472–481 (HLGTSLRSNE). The span at 601–614 (TDSSPSDTISSSPT) shows a compositional bias: low complexity.

This is an uncharacterized protein from Schizosaccharomyces pombe (strain 972 / ATCC 24843) (Fission yeast).